The sequence spans 169 residues: Ribosome maturation factor RimM (169 aa).

The PRC barrel domain maps to 97 to 169; it reads NDEAYFTDLI…KIVVDWEYDY (73 aa).

This sequence belongs to the RimM family. As to quaternary structure, binds ribosomal protein uS19.

The protein resides in the cytoplasm. In terms of biological role, an accessory protein needed during the final step in the assembly of 30S ribosomal subunit, possibly for assembly of the head region. Essential for efficient processing of 16S rRNA. May be needed both before and after RbfA during the maturation of 16S rRNA. It has affinity for free ribosomal 30S subunits but not for 70S ribosomes. This Francisella philomiragia subsp. philomiragia (strain ATCC 25017 / CCUG 19701 / FSC 153 / O#319-036) protein is Ribosome maturation factor RimM.